The following is a 625-amino-acid chain: Probable potassium transport system protein Kup (625 aa).

The next 12 helical transmembrane spans lie at 13–33 (TALA…LYAL), 53–73 (ILSI…VAIV), 103–123 (IYMI…GIIT), 141–161 (VFDP…FLVQ), 172–192 (FGPI…HSVI), 206–226 (AIQF…AVVL), 250–270 (WFFV…ALLL), 282–302 (LLVP…ATVI), 340–360 (IYVP…ILIF), 369–389 (AYGL…AVFI), 400–420 (VLLL…ATSL), and 422–442 (ILSG…ILMT).

The protein belongs to the HAK/KUP transporter (TC 2.A.72) family.

It localises to the cell inner membrane. The enzyme catalyses K(+)(in) + H(+)(in) = K(+)(out) + H(+)(out). In terms of biological role, transport of potassium into the cell. Likely operates as a K(+):H(+) symporter. The chain is Probable potassium transport system protein Kup from Acinetobacter baumannii (strain ACICU).